The following is a 226-amino-acid chain: Triosephosphate isomerase (226 aa).

Position 13–15 (13–15) interacts with substrate; the sequence is NFK. H97 functions as the Electrophile in the catalytic mechanism. Residue E145 is the Proton acceptor of the active site. Residues I150, G185, and 206 to 207 contribute to the substrate site; that span reads AS.

It belongs to the triosephosphate isomerase family. Homotetramer; dimer of dimers.

The protein localises to the cytoplasm. It carries out the reaction D-glyceraldehyde 3-phosphate = dihydroxyacetone phosphate. The protein operates within carbohydrate biosynthesis; gluconeogenesis. It participates in carbohydrate degradation; glycolysis; D-glyceraldehyde 3-phosphate from glycerone phosphate: step 1/1. Functionally, involved in the gluconeogenesis. Catalyzes stereospecifically the conversion of dihydroxyacetone phosphate (DHAP) to D-glyceraldehyde-3-phosphate (G3P). This Methanobacterium bryantii protein is Triosephosphate isomerase.